The following is a 170-amino-acid chain: Crossover junction endodeoxyribonuclease RuvC (170 aa).

Catalysis depends on residues D9, E70, and D145. The Mg(2+) site is built by D9, E70, and D145.

Belongs to the RuvC family. As to quaternary structure, homodimer which binds Holliday junction (HJ) DNA. The HJ becomes 2-fold symmetrical on binding to RuvC with unstacked arms; it has a different conformation from HJ DNA in complex with RuvA. In the full resolvosome a probable DNA-RuvA(4)-RuvB(12)-RuvC(2) complex forms which resolves the HJ. The cofactor is Mg(2+).

Its subcellular location is the cytoplasm. It carries out the reaction Endonucleolytic cleavage at a junction such as a reciprocal single-stranded crossover between two homologous DNA duplexes (Holliday junction).. In terms of biological role, the RuvA-RuvB-RuvC complex processes Holliday junction (HJ) DNA during genetic recombination and DNA repair. Endonuclease that resolves HJ intermediates. Cleaves cruciform DNA by making single-stranded nicks across the HJ at symmetrical positions within the homologous arms, yielding a 5'-phosphate and a 3'-hydroxyl group; requires a central core of homology in the junction. The consensus cleavage sequence is 5'-(A/T)TT(C/G)-3'. Cleavage occurs on the 3'-side of the TT dinucleotide at the point of strand exchange. HJ branch migration catalyzed by RuvA-RuvB allows RuvC to scan DNA until it finds its consensus sequence, where it cleaves and resolves the cruciform DNA. The polypeptide is Crossover junction endodeoxyribonuclease RuvC (Chlamydia trachomatis serovar L2 (strain ATCC VR-902B / DSM 19102 / 434/Bu)).